Consider the following 484-residue polypeptide: Probable glycine dehydrogenase (decarboxylating) subunit 2 (484 aa).

An N6-(pyridoxal phosphate)lysine modification is found at lysine 270.

It belongs to the GcvP family. C-terminal subunit subfamily. In terms of assembly, the glycine cleavage system is composed of four proteins: P, T, L and H. In this organism, the P 'protein' is a heterodimer of two subunits. Pyridoxal 5'-phosphate is required as a cofactor.

The enzyme catalyses N(6)-[(R)-lipoyl]-L-lysyl-[glycine-cleavage complex H protein] + glycine + H(+) = N(6)-[(R)-S(8)-aminomethyldihydrolipoyl]-L-lysyl-[glycine-cleavage complex H protein] + CO2. Its function is as follows. The glycine cleavage system catalyzes the degradation of glycine. The P protein binds the alpha-amino group of glycine through its pyridoxal phosphate cofactor; CO(2) is released and the remaining methylamine moiety is then transferred to the lipoamide cofactor of the H protein. The chain is Probable glycine dehydrogenase (decarboxylating) subunit 2 from Desulforamulus reducens (strain ATCC BAA-1160 / DSM 100696 / MI-1) (Desulfotomaculum reducens).